A 444-amino-acid polypeptide reads, in one-letter code: tRNA pseudouridine synthase Pus10 (444 aa).

Asp265 acts as the Nucleophile in catalysis. 2 residues coordinate substrate: Tyr333 and Tyr405.

Belongs to the pseudouridine synthase Pus10 family.

It carries out the reaction uridine(54) in tRNA = pseudouridine(54) in tRNA. It catalyses the reaction uridine(55) in tRNA = pseudouridine(55) in tRNA. Responsible for synthesis of pseudouridine from uracil-54 and uracil-55 in the psi GC loop of transfer RNAs. In Thermofilum pendens (strain DSM 2475 / Hrk 5), this protein is tRNA pseudouridine synthase Pus10.